The sequence spans 223 residues: Phosphoribosylformylglycinamidine synthase subunit PurQ (223 aa).

Positions 2-223 (KIAVVVFPGS…KSLLKAGVQA (222 aa)) constitute a Glutamine amidotransferase type-1 domain. The Nucleophile role is filled by Cys86. Catalysis depends on residues His195 and Glu197.

As to quaternary structure, part of the FGAM synthase complex composed of 1 PurL, 1 PurQ and 2 PurS subunits.

It is found in the cytoplasm. It carries out the reaction N(2)-formyl-N(1)-(5-phospho-beta-D-ribosyl)glycinamide + L-glutamine + ATP + H2O = 2-formamido-N(1)-(5-O-phospho-beta-D-ribosyl)acetamidine + L-glutamate + ADP + phosphate + H(+). It catalyses the reaction L-glutamine + H2O = L-glutamate + NH4(+). It functions in the pathway purine metabolism; IMP biosynthesis via de novo pathway; 5-amino-1-(5-phospho-D-ribosyl)imidazole from N(2)-formyl-N(1)-(5-phospho-D-ribosyl)glycinamide: step 1/2. Its function is as follows. Part of the phosphoribosylformylglycinamidine synthase complex involved in the purines biosynthetic pathway. Catalyzes the ATP-dependent conversion of formylglycinamide ribonucleotide (FGAR) and glutamine to yield formylglycinamidine ribonucleotide (FGAM) and glutamate. The FGAM synthase complex is composed of three subunits. PurQ produces an ammonia molecule by converting glutamine to glutamate. PurL transfers the ammonia molecule to FGAR to form FGAM in an ATP-dependent manner. PurS interacts with PurQ and PurL and is thought to assist in the transfer of the ammonia molecule from PurQ to PurL. This chain is Phosphoribosylformylglycinamidine synthase subunit PurQ, found in Lactobacillus acidophilus (strain ATCC 700396 / NCK56 / N2 / NCFM).